The following is a 340-amino-acid chain: Nitrilase (340 aa).

Positions 7 to 273 constitute a CN hydrolase domain; that stretch reads IRAAAVQIAP…EGMVVADLDM (267 aa). Glutamate 47 serves as the catalytic Proton acceptor. Lysine 129 is a catalytic residue. Cysteine 163 (nucleophile) is an active-site residue.

Belongs to the carbon-nitrogen hydrolase superfamily. Nitrilase family. As to quaternary structure, forms oligomers.

It catalyses the reaction a nitrile + 2 H2O = a carboxylate + NH4(+). The enzyme catalyses phenylpropanonitrile + 2 H2O = 3-phenylpropanoate + NH4(+). The catalysed reaction is an aliphatic nitrile + 2 H2O = a carboxylate + NH4(+). Highly resistant to various miscible cosolvents and tolerates high substrate concentrations. Catalyzes the hydrolysis of a broad range of nitriles to yield their corresponding carboxylic acid and ammonia. In vitro, shows high activity toward benzylic/unsaturated nitriles. The preferred substrate is trans-cinnamonitrile, followed by mono/di-cyanopyridines and aromatic substituted nitriles, with a moderate activity toward 3-phenylpropionitrile. Shows weaker activity toward the common dinitrile fumaronitrile. Also shows weak activity toward some aliphatic nitriles, including adiponitrile and glutaronitrile, and the arylacetonitrile 2-thiopheneacetonitrile. The protein is Nitrilase of Paraburkholderia phymatum (strain DSM 17167 / CIP 108236 / LMG 21445 / STM815) (Burkholderia phymatum).